A 614-amino-acid polypeptide reads, in one-letter code: Vitamin B12 transporter BtuB (614 aa).

The signal sequence occupies residues 1 to 20 (MIKKASLLTACSVTAFSAWA). The short motif at 26–33 (DTLVVTAN) is the TonB box element. The TBDR plug domain maps to 38-152 (PRSTVLAPTT…IGGVVNIITT (115 aa)). Residues Leu-83, Ser-85, Asn-92, and 110-111 (VS) each bind cyanocob(III)alamin. Positions 155 to 614 (HPGTEISAGW…EYTLSGSYTF (460 aa)) constitute a TBDR beta-barrel domain. 3 consecutive transmembrane segments (beta stranded) span residues 158-165 (TEISAGWG), 169-178 (YQNYDVSTQQ), and 184-195 (TRVTLLGDYAHT). 4 residues coordinate Ca(2+): Asp-199, Gln-211, Asp-213, and Asp-215. The next 2 beta stranded transmembrane spans lie at 217–227 (FLSKTLYGALE) and 232–248 (DVWS…NRTN). The Ca(2+) site is built by Tyr-249 and Asp-250. Ala-251 lines the cyanocob(III)alamin pocket. Asp-261 contributes to the Ca(2+) binding site. The next 14 membrane-spanning stretches (beta stranded) occupy residues 263-277 (RKLY…LRYN), 279-296 (ELIK…KDYN), 309-325 (TLDE…NNII), 328-337 (HGNIGAGVDW), 353-369 (YDQR…QQVG), 371-381 (FTFEGAGRSDD), 385-400 (FGRH…WEFI), 403-417 (YRFI…KAPN), 434-443 (KSKQWEGAFE), 449-458 (VNWRISGYRN), 473-490 (YYNE…TANF), 494-509 (PLTH…ARNA), 517-529 (RRAK…QLDW), and 535-550 (DWGI…YDKD). Thr-309 serves as a coordination point for cyanocob(III)alamin. A cyanocob(III)alamin-binding site is contributed by Arg-517. Tyr-551 serves as a coordination point for cyanocob(III)alamin. The next 3 membrane-spanning stretches (beta stranded) occupy residues 558–572 (TVKM…LAVA), 585–596 (IANLFDKDYETV), and 602–614 (AGRE…SYTF). Positions 597-614 (YGYQTAGREYTLSGSYTF) match the TonB C-terminal box motif.

It belongs to the TonB-dependent receptor family. BtuB (TC 1.B.14.3.1) subfamily.

It is found in the cell outer membrane. Functionally, involved in the active translocation of vitamin B12 (cyanocobalamin) across the outer membrane to the periplasmic space. It derives its energy for transport by interacting with the trans-periplasmic membrane protein TonB. This Escherichia coli O1:K1 / APEC protein is Vitamin B12 transporter BtuB.